Here is a 193-residue protein sequence, read N- to C-terminus: Ion-translocating oxidoreductase complex subunit B (193 aa).

The hydrophobic stretch occupies residues 1–26 (MSTMLIAVILLTLLALFFGVLLGFAA). The region spanning 32–90 (EGNPIVDELEAILPQTQCGQCGYPGCRPYAEAIANGDKVNKCPPGGTATMEKLASLMGV) is the 4Fe-4S domain. [4Fe-4S] cluster-binding residues include cysteine 49, cysteine 52, cysteine 57, cysteine 73, cysteine 114, cysteine 117, cysteine 120, cysteine 124, cysteine 144, cysteine 147, cysteine 150, and cysteine 154. 4Fe-4S ferredoxin-type domains are found at residues 105–134 (KVAYIREDECIGCTKCIQACPVDAIIGAGK) and 136–164 (MHTVLTADCTGCDLCVEPCPVDCIDMIPV).

It belongs to the 4Fe4S bacterial-type ferredoxin family. RnfB subfamily. In terms of assembly, the complex is composed of six subunits: RnfA, RnfB, RnfC, RnfD, RnfE and RnfG. Requires [4Fe-4S] cluster as cofactor.

It is found in the cell inner membrane. Its function is as follows. Part of a membrane-bound complex that couples electron transfer with translocation of ions across the membrane. The sequence is that of Ion-translocating oxidoreductase complex subunit B from Shewanella sp. (strain MR-7).